The following is a 442-amino-acid chain: D-serine dehydratase (442 aa).

The residue at position 118 (Lys118) is an N6-(pyridoxal phosphate)lysine.

This sequence belongs to the serine/threonine dehydratase family. DsdA subfamily. Monomer. Requires pyridoxal 5'-phosphate as cofactor.

The enzyme catalyses D-serine = pyruvate + NH4(+). The chain is D-serine dehydratase from Escherichia coli O81 (strain ED1a).